Consider the following 138-residue polypeptide: Ribosome maturation factor RimP (138 aa).

The protein belongs to the RimP family.

The protein resides in the cytoplasm. Functionally, required for maturation of 30S ribosomal subunits. The sequence is that of Ribosome maturation factor RimP from Campylobacter concisus (strain 13826).